The sequence spans 419 residues: UDP-N-acetylglucosamine 1-carboxyvinyltransferase 2 (419 aa).

Phosphoenolpyruvate is bound at residue 22 to 23; the sequence is KN. A UDP-N-acetyl-alpha-D-glucosamine-binding site is contributed by arginine 92. Aspartate 116 functions as the Proton donor in the catalytic mechanism. UDP-N-acetyl-alpha-D-glucosamine is bound by residues 121–125, aspartate 306, and leucine 328; that span reads RPIDQ.

This sequence belongs to the EPSP synthase family. MurA subfamily.

The protein resides in the cytoplasm. It carries out the reaction phosphoenolpyruvate + UDP-N-acetyl-alpha-D-glucosamine = UDP-N-acetyl-3-O-(1-carboxyvinyl)-alpha-D-glucosamine + phosphate. It participates in cell wall biogenesis; peptidoglycan biosynthesis. Cell wall formation. Adds enolpyruvyl to UDP-N-acetylglucosamine. This Latilactobacillus sakei subsp. sakei (strain 23K) (Lactobacillus sakei subsp. sakei) protein is UDP-N-acetylglucosamine 1-carboxyvinyltransferase 2.